The sequence spans 552 residues: Glutamine--tRNA ligase (552 aa).

The 'HIGH' region motif lies at 34-44 (PEPNGYLHIGH). ATP is bound by residues 35-37 (EPN) and 41-47 (HIGHAKS). Residues D67 and Y212 each coordinate L-glutamine. ATP-binding positions include T231, 261-262 (RL), and 269-271 (MSK). The 'KMSKS' region signature appears at 268–272 (VMSKR).

The protein belongs to the class-I aminoacyl-tRNA synthetase family. As to quaternary structure, monomer.

The protein localises to the cytoplasm. The enzyme catalyses tRNA(Gln) + L-glutamine + ATP = L-glutaminyl-tRNA(Gln) + AMP + diphosphate. The chain is Glutamine--tRNA ligase from Aliivibrio fischeri (strain MJ11) (Vibrio fischeri).